The primary structure comprises 78 residues: U7-lycotoxin-Ls1h (78 aa).

The N-terminal stretch at 1-22 is a signal peptide; it reads MKLIIFTGLTLLLIVSLIDVEA. The propeptide occupies 23–26; sequence QNEG.

The protein belongs to the neurotoxin 19 (CSTX) family. 07 (U7-Lctx) subfamily. Contains 4 disulfide bonds. Expressed by the venom gland.

The protein resides in the secreted. The chain is U7-lycotoxin-Ls1h from Lycosa singoriensis (Wolf spider).